Here is a 377-residue protein sequence, read N- to C-terminus: Presenilin-associated rhomboid-like protein, mitochondrial (377 aa).

The transit peptide at 1 to 50 (MALYSWVQRGWRCGQTWAPLLGGGYRELSATQARQLLGRRFNLLLQQKCG) directs the protein to the mitochondrion. Over 51–95 (FRKAPRKVEPRRSDTGSSGEAYKRSALIPPLEETVFYPSPYPVRT) the chain is Mitochondrial matrix. Residues S63 and S68 each carry the phosphoserine modification. A helical membrane pass occupies residues 96–116 (LLKPFFFTVGFTGCAFGSAAI). At 117–165 (WQYESLKSRVQSYFDGIKADWLDSIRPQKEGNLRKEINKWWNSLSDGQR) the chain is on the mitochondrial intermembrane side. A helical membrane pass occupies residues 166–186 (TVTGIIAANALVFCLWRVPSL). Residues 187–214 (HRTMIRYFTSNPASKVLCSPMLLSTFSH) lie on the Mitochondrial matrix side of the membrane. Residues 215–235 (FSLFHMAANMYVLWSFSTSIV) form a helical membrane-spanning segment. Residues 236–242 (NILGQEQ) lie on the Mitochondrial intermembrane side of the membrane. A helical membrane pass occupies residues 243-263 (FVAVYLSAGVISNFVSYVCKV). Residues 264–268 (ATGRY) lie on the Mitochondrial matrix side of the membrane. The chain crosses the membrane as a helical span at residues 269–289 (GPSLGASGAIMTVLAAVCTKI). S275 functions as the Nucleophile in the catalytic mechanism. Residues 290 to 293 (PEGR) are Mitochondrial intermembrane-facing. The chain crosses the membrane as a helical span at residues 294–314 (LAIIFLPVFTFTAGNALKAII). Residues 315 to 331 (AMDTAGMILGWKFFDHA) are Mitochondrial matrix-facing. A helical membrane pass occupies residues 332–352 (AHLGGALFGIWYITYGHELIW). The active site involves H333. Topologically, residues 353 to 377 (KNREPLVKIWHEIRTNGPKKGGGSK) are mitochondrial intermembrane.

This sequence belongs to the peptidase S54 family. In terms of assembly, interacts with PSEN1 and PSEN2. Binds OPA1. Post-translationally, P-beta is proteolytically processed (beta-cleavage) in a PARL-dependent manner.

The protein resides in the mitochondrion inner membrane. It localises to the nucleus. The catalysed reaction is Cleaves type-1 transmembrane domains using a catalytic dyad composed of serine and histidine that are contributed by different transmembrane domains.. Required for the control of apoptosis during postnatal growth. Essential for proteolytic processing of an antiapoptotic form of OPA1 which prevents the release of mitochondrial cytochrome c in response to intrinsic apoptotic signals. Required for the maturation of PINK1 into its 52kDa mature form after its cleavage by mitochondrial-processing peptidase (MPP). Promotes cleavage of serine/threonine-protein phosphatase PGAM5 in damaged mitochondria in response to loss of mitochondrial membrane potential. Mediates differential cleavage of PINK1 and PGAM5 depending on the health status of mitochondria, disassociating from PINK1 and associating with PGAM5 in response to mitochondrial membrane potential loss. Required for processing of CLPB into a form with higher protein disaggregase activity by removing an autoinhibitory N-terminal peptide. Promotes processing of DIABLO/SMAC in the mitochondrion which is required for DIABLO apoptotic activity. Also required for cleavage of STARD7 and TTC19. Promotes changes in mitochondria morphology regulated by phosphorylation of P-beta domain. The chain is Presenilin-associated rhomboid-like protein, mitochondrial from Rattus norvegicus (Rat).